Reading from the N-terminus, the 325-residue chain is GTP 3',8-cyclase (325 aa).

A Radical SAM core domain is found at 4-219 (TYQREINYLR…DAISAKLGPL (216 aa)). A GTP-binding site is contributed by arginine 13. Positions 20 and 24 each coordinate [4Fe-4S] cluster. Tyrosine 26 contacts S-adenosyl-L-methionine. Cysteine 27 is a binding site for [4Fe-4S] cluster. Arginine 63 is a binding site for GTP. Glycine 67 provides a ligand contact to S-adenosyl-L-methionine. Threonine 94 serves as a coordination point for GTP. S-adenosyl-L-methionine is bound at residue serine 118. Residue lysine 155 participates in GTP binding. Methionine 189 serves as a coordination point for S-adenosyl-L-methionine. The [4Fe-4S] cluster site is built by cysteine 254 and cysteine 257. 259–261 (RLR) provides a ligand contact to GTP. Residue cysteine 271 coordinates [4Fe-4S] cluster.

Belongs to the radical SAM superfamily. MoaA family. Monomer and homodimer. It depends on [4Fe-4S] cluster as a cofactor.

It carries out the reaction GTP + AH2 + S-adenosyl-L-methionine = (8S)-3',8-cyclo-7,8-dihydroguanosine 5'-triphosphate + 5'-deoxyadenosine + L-methionine + A + H(+). It participates in cofactor biosynthesis; molybdopterin biosynthesis. Catalyzes the cyclization of GTP to (8S)-3',8-cyclo-7,8-dihydroguanosine 5'-triphosphate. The polypeptide is GTP 3',8-cyclase (Pelotomaculum thermopropionicum (strain DSM 13744 / JCM 10971 / SI)).